The following is a 131-amino-acid chain: Pancreatic polypeptide prohormone (131 aa).

Positions 1 to 29 (MAAAHRCLFLLLLSTCVALLLQPPLGALG) are cleaved as a signal peptide. Tyrosine 65 bears the Tyrosine amide mark.

Belongs to the NPY family.

The protein localises to the secreted. Hormone secreted by pancreatic cells that acts as a regulator of pancreatic and gastrointestinal functions probably by signaling through the G protein-coupled receptor NPY4R2. The protein is Pancreatic polypeptide prohormone (PPY) of Bos taurus (Bovine).